A 149-amino-acid chain; its full sequence is Transcriptional repressor NrdR (149 aa).

A zinc finger spans residues 3 to 34 (CPFCAAVDTKVIDSRLVSDGSQVRRRRQCLDC). Positions 49–139 (PRVIKSDDVR…VYRSFEDIRE (91 aa)) constitute an ATP-cone domain.

It belongs to the NrdR family. It depends on Zn(2+) as a cofactor.

In terms of biological role, negatively regulates transcription of bacterial ribonucleotide reductase nrd genes and operons by binding to NrdR-boxes. This Yersinia enterocolitica serotype O:8 / biotype 1B (strain NCTC 13174 / 8081) protein is Transcriptional repressor NrdR.